The chain runs to 80 residues: Putative membrane protein insertion efficiency factor (80 aa).

The disordered stretch occupies residues 60-80 (SKTGKDPVPDRFSLKRNQEGE). The segment covering 62 to 80 (TGKDPVPDRFSLKRNQEGE) has biased composition (basic and acidic residues).

This sequence belongs to the UPF0161 family.

It localises to the cell membrane. Functionally, could be involved in insertion of integral membrane proteins into the membrane. The polypeptide is Putative membrane protein insertion efficiency factor (Streptococcus pneumoniae serotype 4 (strain ATCC BAA-334 / TIGR4)).